Here is a 166-residue protein sequence, read N- to C-terminus: Phosphopantetheine adenylyltransferase (166 aa).

Ser-8 contributes to the substrate binding site. ATP is bound by residues 8 to 9 (SF) and His-16. Residues Lys-40, Thr-72, and Arg-86 each contribute to the substrate site. ATP is bound by residues 87 to 89 (GLR), Glu-97, and 122 to 128 (YSFLSSS).

This sequence belongs to the bacterial CoaD family. Homohexamer. The cofactor is Mg(2+).

The protein localises to the cytoplasm. It carries out the reaction (R)-4'-phosphopantetheine + ATP + H(+) = 3'-dephospho-CoA + diphosphate. It functions in the pathway cofactor biosynthesis; coenzyme A biosynthesis; CoA from (R)-pantothenate: step 4/5. Functionally, reversibly transfers an adenylyl group from ATP to 4'-phosphopantetheine, yielding dephospho-CoA (dPCoA) and pyrophosphate. The polypeptide is Phosphopantetheine adenylyltransferase (Synechococcus elongatus (strain ATCC 33912 / PCC 7942 / FACHB-805) (Anacystis nidulans R2)).